Here is a 334-residue protein sequence, read N- to C-terminus: Tetraacyldisaccharide 4'-kinase (334 aa).

Residue 60-67 (TVGGTGKT) participates in ATP binding.

This sequence belongs to the LpxK family.

It carries out the reaction a lipid A disaccharide + ATP = a lipid IVA + ADP + H(+). The protein operates within glycolipid biosynthesis; lipid IV(A) biosynthesis; lipid IV(A) from (3R)-3-hydroxytetradecanoyl-[acyl-carrier-protein] and UDP-N-acetyl-alpha-D-glucosamine: step 6/6. Its function is as follows. Transfers the gamma-phosphate of ATP to the 4'-position of a tetraacyldisaccharide 1-phosphate intermediate (termed DS-1-P) to form tetraacyldisaccharide 1,4'-bis-phosphate (lipid IVA). The chain is Tetraacyldisaccharide 4'-kinase from Stutzerimonas stutzeri (strain A1501) (Pseudomonas stutzeri).